The sequence spans 658 residues: ATP-dependent RNA helicase MSS116, mitochondrial (658 aa).

A mitochondrion-targeting transit peptide spans 1–35 (MFRVTGIATARAVALQPFRAPLGVIRRFGISATAS). The span at 40–79 (HGHDMQSRNGSRWDSRRQGDRRSSRWEGRGSDREDGERGS) shows a compositional bias: basic and acidic residues. The interval 40 to 104 (HGHDMQSRNG…DGAAREGFSL (65 aa)) is disordered. The short motif at 126–154 (TLVEEGVLSNELYEMLQSRGFDKLTPVQQ) is the Q motif element. The 186-residue stretch at 158 to 343 (KPILQTEHDV…NSIMNHAKCL (186 aa)) folds into the Helicase ATP-binding domain. Position 171 to 178 (171 to 178 (AKTGTGKT)) interacts with ATP. Positions 284–287 (DEAD) match the DEAD box motif. Residues 372–528 (NITASLYKIR…TFDAAAQELS (157 aa)) enclose the Helicase C-terminal domain.

Belongs to the DEAD box helicase family. DDX18/HAS1 subfamily.

The protein localises to the mitochondrion matrix. It catalyses the reaction ATP + H2O = ADP + phosphate + H(+). In terms of biological role, ATP-dependent RNA helicase required for mitochondrial splicing of group I and II introns. Also required for efficient mitochondrial translation. The protein is ATP-dependent RNA helicase MSS116, mitochondrial (MSS116) of Eremothecium gossypii (strain ATCC 10895 / CBS 109.51 / FGSC 9923 / NRRL Y-1056) (Yeast).